The sequence spans 122 residues: Basic phospholipase A2 (122 aa).

7 disulfide bridges follow: C26–C115, C28–C44, C43–C95, C49–C122, C50–C88, C57–C81, and C75–C86. Ca(2+) contacts are provided by Y27, G29, and G31. H47 is an active-site residue. Position 48 (D48) interacts with Ca(2+). The active site involves D89.

Belongs to the phospholipase A2 family. Group II subfamily. D49 sub-subfamily. In terms of assembly, homodimer. Ca(2+) is required as a cofactor. Expressed by the venom gland.

It is found in the secreted. The catalysed reaction is a 1,2-diacyl-sn-glycero-3-phosphocholine + H2O = a 1-acyl-sn-glycero-3-phosphocholine + a fatty acid + H(+). Snake venom phospholipase A2 (PLA2) that inhibits neuromuscular transmission by blocking acetylcholine release from the nerve termini. PLA2 catalyzes the calcium-dependent hydrolysis of the 2-acyl groups in 3-sn-phosphoglycerides. This chain is Basic phospholipase A2, found in Gloydius blomhoffii (Mamushi).